Consider the following 486-residue polypeptide: mRNA cap guanine-N(7) methyltransferase (486 aa).

Residues 1 to 92 form a disordered region; sequence MAGGADLDEP…ADRKAARERA (92 aa). Composition is skewed to basic and acidic residues over residues 9–28, 35–54, and 82–92; these read EPPR…DSTH, VPRD…EPAR, and EADRKAARERA. One can recognise an mRNA cap 0 methyltransferase domain in the interval 135-486; that stretch reads SRIKGLRSFN…FYVGFCFYKV (352 aa). 144–145 is an mRNA binding site; sequence NN. Residues K148, G177, D201, D247, 281 to 283, and Y286 contribute to the S-adenosyl-L-methionine site; that span reads MFC. Positions 333-351 are enriched in basic and acidic residues; it reads VEMKKKQAEAGDGSKKDDG. Residues 333 to 365 form a disordered region; sequence VEMKKKQAEAGDGSKKDDGGDAEEGELDEPEVE. Over residues 352 to 363 the composition is skewed to acidic residues; sequence GDAEEGELDEPE.

This sequence belongs to the class I-like SAM-binding methyltransferase superfamily. mRNA cap 0 methyltransferase family.

It localises to the nucleus. The enzyme catalyses a 5'-end (5'-triphosphoguanosine)-ribonucleoside in mRNA + S-adenosyl-L-methionine = a 5'-end (N(7)-methyl 5'-triphosphoguanosine)-ribonucleoside in mRNA + S-adenosyl-L-homocysteine. In terms of biological role, responsible for methylating the 5'-cap structure of mRNAs. The chain is mRNA cap guanine-N(7) methyltransferase (ABD1) from Pyricularia oryzae (strain 70-15 / ATCC MYA-4617 / FGSC 8958) (Rice blast fungus).